A 711-amino-acid chain; its full sequence is 1,4-alpha-glucan-branching enzyme (711 aa).

2 residues coordinate (1,4-alpha-D-glucosyl)n: W98 and K135. The active-site Nucleophile is D353. E414 acts as the Proton donor in catalysis.

This sequence belongs to the glycosyl hydrolase 13 family. GlgB subfamily.

The protein localises to the cytoplasm. It catalyses the reaction Transfers a segment of a (1-&gt;4)-alpha-D-glucan chain to a primary hydroxy group in a similar glucan chain.. The protein operates within glycan biosynthesis; glycogen biosynthesis. Functionally, glycogen-branching enzyme participates in the glycogen biosynthetic process along with glycogenin and glycogen synthase. Generates alpha-1,6-glucosidic branches from alpha-1,4-linked glucose chains, to increase solubility of the glycogen polymer. The polypeptide is 1,4-alpha-glucan-branching enzyme (GLC3) (Debaryomyces hansenii (strain ATCC 36239 / CBS 767 / BCRC 21394 / JCM 1990 / NBRC 0083 / IGC 2968) (Yeast)).